We begin with the raw amino-acid sequence, 119 residues long: Large ribosomal subunit protein bL20 (119 aa).

Belongs to the bacterial ribosomal protein bL20 family.

Binds directly to 23S ribosomal RNA and is necessary for the in vitro assembly process of the 50S ribosomal subunit. It is not involved in the protein synthesizing functions of that subunit. The sequence is that of Large ribosomal subunit protein bL20 from Xanthomonas campestris pv. campestris (strain 8004).